Reading from the N-terminus, the 420-residue chain is UDP-N-acetylglucosamine 1-carboxyvinyltransferase (420 aa).

Position 22 to 23 (Lys22 to Asn23) interacts with phosphoenolpyruvate. Residue Arg94 participates in UDP-N-acetyl-alpha-D-glucosamine binding. Residue Cys118 is the Proton donor of the active site. At Cys118 the chain carries 2-(S-cysteinyl)pyruvic acid O-phosphothioketal. Positions 306 and 328 each coordinate UDP-N-acetyl-alpha-D-glucosamine.

Belongs to the EPSP synthase family. MurA subfamily.

It is found in the cytoplasm. It catalyses the reaction phosphoenolpyruvate + UDP-N-acetyl-alpha-D-glucosamine = UDP-N-acetyl-3-O-(1-carboxyvinyl)-alpha-D-glucosamine + phosphate. Its pathway is cell wall biogenesis; peptidoglycan biosynthesis. Functionally, cell wall formation. Adds enolpyruvyl to UDP-N-acetylglucosamine. This Jannaschia sp. (strain CCS1) protein is UDP-N-acetylglucosamine 1-carboxyvinyltransferase.